Reading from the N-terminus, the 304-residue chain is UDP-3-O-acyl-N-acetylglucosamine deacetylase (304 aa).

Zn(2+)-binding residues include His-78, His-237, and Asp-241. The active-site Proton donor is His-264.

It belongs to the LpxC family. Requires Zn(2+) as cofactor.

The enzyme catalyses a UDP-3-O-[(3R)-3-hydroxyacyl]-N-acetyl-alpha-D-glucosamine + H2O = a UDP-3-O-[(3R)-3-hydroxyacyl]-alpha-D-glucosamine + acetate. It functions in the pathway glycolipid biosynthesis; lipid IV(A) biosynthesis; lipid IV(A) from (3R)-3-hydroxytetradecanoyl-[acyl-carrier-protein] and UDP-N-acetyl-alpha-D-glucosamine: step 2/6. Catalyzes the hydrolysis of UDP-3-O-myristoyl-N-acetylglucosamine to form UDP-3-O-myristoylglucosamine and acetate, the committed step in lipid A biosynthesis. The protein is UDP-3-O-acyl-N-acetylglucosamine deacetylase of Legionella pneumophila (strain Paris).